We begin with the raw amino-acid sequence, 213 residues long: 2-C-methyl-D-erythritol 4-phosphate cytidylyltransferase (213 aa).

This sequence belongs to the IspD/TarI cytidylyltransferase family. IspD subfamily.

The enzyme catalyses 2-C-methyl-D-erythritol 4-phosphate + CTP + H(+) = 4-CDP-2-C-methyl-D-erythritol + diphosphate. It participates in isoprenoid biosynthesis; isopentenyl diphosphate biosynthesis via DXP pathway; isopentenyl diphosphate from 1-deoxy-D-xylulose 5-phosphate: step 2/6. Its function is as follows. Catalyzes the formation of 4-diphosphocytidyl-2-C-methyl-D-erythritol from CTP and 2-C-methyl-D-erythritol 4-phosphate (MEP). This is 2-C-methyl-D-erythritol 4-phosphate cytidylyltransferase from Thermus thermophilus (strain ATCC BAA-163 / DSM 7039 / HB27).